Reading from the N-terminus, the 379-residue chain is MPAVKIIMSTETSASETTPLRRSENETPDHKELAQSNSNSRQTTVNSNNNNYSNSVQVRLQEQDRDSDSEQQQHTATITMDTNKRILCRVGLDVLILLCAGFPILLFFLLGEPYKRGFFCDDESLKHPFHDSTVRNWMLYFIGAVIPVGVIFIVEVIISQNKAKQDNGNATSRRYVFMNYELPDWMIECYKKIGIYAFGAVLSQLTTDIAKYSIGRLRPHFIAVCQPQMADGSTCDDAINAGKYIQEFTCKGVGSSARMLKEMRLSFPSGHSSFTFFAMVYLALYLQARMTWRGSKLLRHLLQFLFIMVAWYTALSRVSDYKHHWSDVLAGSLIGSISALVVANYVSDLFQKPNTKPYLARTVQDMNASPAQAITITTN.

The disordered stretch occupies residues M1–S53. Residues S9 to T18 show a composition bias toward polar residues. A compositionally biased stretch (basic and acidic residues) spans P19–L33. The span at Q35 to S53 shows a compositional bias: low complexity. The N-linked (GlcNAc...) asparagine glycan is linked to N51. 2 helical membrane passes run V90–L110 and M138–I158. N169 carries an N-linked (GlcNAc...) asparagine glycan. Transmembrane regions (helical) follow at residues S266 to L286 and A330 to F350.

The protein belongs to the PA-phosphatase related phosphoesterase family. In terms of assembly, homodimer. This complex seems not to be involved in substrate recognition, it may confer only structural or functional stability. In terms of tissue distribution, expressed in embryonic gut in a pattern that guides germ cells towards mesoderm (initially in hindgut and then on lower side of gut). During extended germ band stage, expressed in ectoderm as a medial band throughout the trunk.

The protein localises to the membrane. It carries out the reaction a 1,2-diacyl-sn-glycero-3-phosphate + H2O = a 1,2-diacyl-sn-glycerol + phosphate. Its function is as follows. Responsible for guiding the germ cells early in the process of migration from the lumen of the developing gut towards the overlying mesoderm, where the germ cells enter the gonads. May be involved in lipid metabolism. In Drosophila melanogaster (Fruit fly), this protein is Putative phosphatidate phosphatase (wun).